A 203-amino-acid polypeptide reads, in one-letter code: Dual-action ribosomal maturation protein DarP (203 aa).

Disordered regions lie at residues 1–31 (MRPM…SKSQ) and 183–203 (GASD…DDEA). Acidic residues predominate over residues 186–203 (DSDDEAAGDAGDDHDDEA).

Belongs to the DarP family.

The protein resides in the cytoplasm. Member of a network of 50S ribosomal subunit biogenesis factors which assembles along the 30S-50S interface, preventing incorrect 23S rRNA structures from forming. Promotes peptidyl transferase center (PTC) maturation. This is Dual-action ribosomal maturation protein DarP from Burkholderia cenocepacia (strain ATCC BAA-245 / DSM 16553 / LMG 16656 / NCTC 13227 / J2315 / CF5610) (Burkholderia cepacia (strain J2315)).